The chain runs to 283 residues: Phosphatidylserine decarboxylase proenzyme (283 aa).

Active-site charge relay system; for autoendoproteolytic cleavage activity residues include Asp-89, His-146, and Ser-249. Catalysis depends on Ser-249, which acts as the Schiff-base intermediate with substrate; via pyruvic acid; for decarboxylase activity. Ser-249 is modified (pyruvic acid (Ser); by autocatalysis).

Belongs to the phosphatidylserine decarboxylase family. PSD-B subfamily. Prokaryotic type I sub-subfamily. As to quaternary structure, heterodimer of a large membrane-associated beta subunit and a small pyruvoyl-containing alpha subunit. The cofactor is pyruvate. Is synthesized initially as an inactive proenzyme. Formation of the active enzyme involves a self-maturation process in which the active site pyruvoyl group is generated from an internal serine residue via an autocatalytic post-translational modification. Two non-identical subunits are generated from the proenzyme in this reaction, and the pyruvate is formed at the N-terminus of the alpha chain, which is derived from the carboxyl end of the proenzyme. The autoendoproteolytic cleavage occurs by a canonical serine protease mechanism, in which the side chain hydroxyl group of the serine supplies its oxygen atom to form the C-terminus of the beta chain, while the remainder of the serine residue undergoes an oxidative deamination to produce ammonia and the pyruvoyl prosthetic group on the alpha chain. During this reaction, the Ser that is part of the protease active site of the proenzyme becomes the pyruvoyl prosthetic group, which constitutes an essential element of the active site of the mature decarboxylase.

The protein resides in the cell membrane. The catalysed reaction is a 1,2-diacyl-sn-glycero-3-phospho-L-serine + H(+) = a 1,2-diacyl-sn-glycero-3-phosphoethanolamine + CO2. Its pathway is phospholipid metabolism; phosphatidylethanolamine biosynthesis; phosphatidylethanolamine from CDP-diacylglycerol: step 2/2. In terms of biological role, catalyzes the formation of phosphatidylethanolamine (PtdEtn) from phosphatidylserine (PtdSer). The protein is Phosphatidylserine decarboxylase proenzyme of Legionella pneumophila (strain Lens).